The primary structure comprises 273 residues: Replication factor A protein 2 (273 aa).

Over residues 1-13 the composition is skewed to polar residues; sequence MATYQPYNEYSSV. Residues 1–38 form a disordered region; the sequence is MATYQPYNEYSSVTGGGFENSESRPGSGESETNTRVNT. Ser-27 is subject to Phosphoserine. Polar residues predominate over residues 29 to 38; sequence ESETNTRVNT. A DNA-binding region (OB) is located at residues 69–157; sequence VCFVGVVRNI…NIQYAVIKPI (89 aa). A Phosphoserine modification is found at Ser-122.

It belongs to the replication factor A protein 2 family. As to quaternary structure, heterotrimer of 69, 36, and 13 kDa chains. The DNA-binding activity may reside exclusively on the 69 kDa subunit. Interacts with MCM10. Phosphorylated in a cell cycle-dependent manner with phosphorylation increasing at the entry in S phase and dephosphorylation occurring at mitosis. Post-translationally, the N-terminus is blocked.

The protein localises to the nucleus. Its function is as follows. Binds to single-stranded sequences participating in DNA replication in addition to those mediating transcriptional repression (URS1) and activation (CAR1). Stimulates the activity of a cognate strand exchange protein (SEP1). It cooperates with T-AG and DNA topoisomerase I to unwind template DNA containing the simian virus 40 origin of DNA replication. In Saccharomyces cerevisiae (strain ATCC 204508 / S288c) (Baker's yeast), this protein is Replication factor A protein 2 (RFA2).